Here is a 351-residue protein sequence, read N- to C-terminus: MMEFLMVFIISTVSAAVFTLFIRNILRSADIGDKPIVTEHSHKAGTPTMGGLGMLLALLLVTVLYRNNPYLVLTSLIVLTAAIVGLLDDLLGLKVKEVQRIIRNVSEGPLEVGQLVLKPGEEARAATDKAKRDVEALLSEGLVEVVGEAPIKNEVSEGEKILAQLLIGVFLVLSGAVGKLGGFYLGLAAAPIAIAGMVGAINAVNLIDGMDGMAAGIMLIASLSCAIFLGLSGQALPFLALAGMCAGFLVFNRHPASIFMGDTGSFALGAGYATAVMLTDTVYFGVLAIAVPVVSVIVSLLHRAGVIRLPVEPLHHTLHYRGMSERRIVLLYWLITLIVCALGLYMTGSIL.

10 helical membrane passes run 2–22, 44–64, 71–91, 158–178, 181–201, 212–232, 235–255, 258–278, 281–301, and 328–348; these read MEFL…TLFI, AGTP…VTVL, LVLT…DDLL, GEKI…GAVG, GGFY…VGAI, GMAA…LGLS, ALPF…NRHP, IFMG…AVML, TVYF…VSLL, and IVLL…YMTG.

The protein belongs to the glycosyltransferase 4 family. MraY subfamily. Mg(2+) serves as cofactor.

Its subcellular location is the cell membrane. It catalyses the reaction UDP-N-acetyl-alpha-D-muramoyl-L-alanyl-gamma-D-glutamyl-meso-2,6-diaminopimeloyl-D-alanyl-D-alanine + di-trans,octa-cis-undecaprenyl phosphate = di-trans,octa-cis-undecaprenyl diphospho-N-acetyl-alpha-D-muramoyl-L-alanyl-D-glutamyl-meso-2,6-diaminopimeloyl-D-alanyl-D-alanine + UMP. The sequence is that of Putative phospho-N-acetylmuramoyl-pentapeptide-transferase from Methanothermobacter thermautotrophicus (strain ATCC 29096 / DSM 1053 / JCM 10044 / NBRC 100330 / Delta H) (Methanobacterium thermoautotrophicum).